We begin with the raw amino-acid sequence, 131 residues long: Small ribosomal subunit protein uS8 (131 aa).

Belongs to the universal ribosomal protein uS8 family. Part of the 30S ribosomal subunit. Contacts proteins S5 and S12.

One of the primary rRNA binding proteins, it binds directly to 16S rRNA central domain where it helps coordinate assembly of the platform of the 30S subunit. The protein is Small ribosomal subunit protein uS8 of Pelagibacter ubique (strain HTCC1062).